A 476-amino-acid polypeptide reads, in one-letter code: Angiotensinogen (476 aa).

Positions 1–24 (MAPAGVSLRATILCLVAWAGLAAG) are cleaved as a signal peptide. 4 N-linked (GlcNAc...) asparagine glycosylation sites follow: Asn-38, Asn-161, Asn-295, and Asn-319. Cys-42 and Cys-162 are oxidised to a cystine.

The protein belongs to the serpin family. In terms of processing, in response to low blood pressure, the enzyme renin/REN cleaves angiotensinogen to produce angiotensin-1. Angiotensin-1 is a substrate of ACE (angiotensin converting enzyme) that removes a dipeptide to yield the physiologically active peptide angiotensin-2. Angiotensin-1 and angiotensin-2 can be further processed to generate angiotensin-3, angiotensin-4. Angiotensin 1-9 is cleaved from angiotensin-1 by ACE2 and can be further processed by ACE to produce angiotensin 1-7, angiotensin 1-5 and angiotensin 1-4. Angiotensin 1-7 has also been proposed to be cleaved from angiotensin-2 by ACE2 or from angiotensin-1 by MME (neprilysin). Post-translationally, the disulfide bond is labile. Angiotensinogen is present in the circulation in a near 40:60 ratio with the oxidized disulfide-bonded form, which preferentially interacts with receptor-bound renin.

The protein resides in the secreted. Essential component of the renin-angiotensin system (RAS), a potent regulator of blood pressure, body fluid and electrolyte homeostasis. Functionally, acts directly on vascular smooth muscle as a potent vasoconstrictor, affects cardiac contractility and heart rate through its action on the sympathetic nervous system, and alters renal sodium and water absorption through its ability to stimulate the zona glomerulosa cells of the adrenal cortex to synthesize and secrete aldosterone. Acts by binding to angiotensin receptors AGTR1 and AGTR2. Also binds the DEAR/FBXW7-AS1 receptor. In terms of biological role, stimulates aldosterone release. Its function is as follows. Is a ligand for the G-protein coupled receptor MAS1. Has vasodilator and antidiuretic effects. Has an antithrombotic effect that involves MAS1-mediated release of nitric oxide from platelets. This is Angiotensinogen (AGT) from Pan troglodytes (Chimpanzee).